A 298-amino-acid chain; its full sequence is Mitochondrial 2-oxodicarboxylate carrier (298 aa).

Solcar repeat units follow at residues 10–99, 106–195, and 204–293; these read HETC…YKKF, SPGL…VKDN, and LEFL…TYAW. 6 helical membrane-spanning segments follow: residues 16–36, 69–88, 112–132, 166–186, 204–224, and 276–296; these read VAAG…LDVV, FGFY…KRAV, PIAG…FEVV, GLNK…MTYF, LEFL…SVFN, and LGPG…WLQE.

Belongs to the mitochondrial carrier (TC 2.A.29) family. Widely expressed.

It localises to the mitochondrion inner membrane. It catalyses the reaction 2-oxoadipate(in) + 2-oxoglutarate(out) = 2-oxoadipate(out) + 2-oxoglutarate(in). The enzyme catalyses hexanedioate(in) + 2-oxoglutarate(out) = hexanedioate(out) + 2-oxoglutarate(in). The catalysed reaction is L-2-aminoadipate(in) + 2-oxoglutarate(out) = L-2-aminoadipate(out) + 2-oxoglutarate(in). It carries out the reaction glutarate(in) + 2-oxoglutarate(out) = glutarate(out) + 2-oxoglutarate(in). It catalyses the reaction 2-oxoheptanedioate(in) + 2-oxoglutarate(out) = 2-oxoheptanedioate(out) + 2-oxoglutarate(in). The enzyme catalyses heptanedioate(in) + 2-oxoglutarate(out) = heptanedioate(out) + 2-oxoglutarate(in). The catalysed reaction is citrate(in) + 2-oxoglutarate(out) = citrate(out) + 2-oxoglutarate(in). In terms of biological role, transports dicarboxylates across the inner membranes of mitochondria by a counter-exchange mechanism. Can transport 2-oxoadipate (2-oxohexanedioate), 2-oxoglutarate, adipate (hexanedioate), glutarate, and to a lesser extent, pimelate (heptanedioate), 2-oxopimelate (2-oxoheptanedioate), 2-aminoadipate (2-aminohexanedioate), oxaloacetate, and citrate. Plays a central role in catabolism of lysine, hydroxylysine, and tryptophan, by transporting common metabolite intermediates (such as 2-oxoadipate) into the mitochondria, where it is converted into acetyl-CoA and can enter the citric acid (TCA) cycle. This chain is Mitochondrial 2-oxodicarboxylate carrier (Slc25a21), found in Rattus norvegicus (Rat).